Reading from the N-terminus, the 511-residue chain is Probable lipid II flippase MurJ (511 aa).

Transmembrane regions (helical) follow at residues 31–51 (IFGA…PNLL), 90–110 (LLTL…PWVI), 130–150 (LLKI…VGAI), 159–179 (IPAF…LFAA), 182–202 (FNPP…LQLV), 237–257 (ILGV…ASFL), 271–291 (LMEF…LPSL), 314–334 (CFLL…PLTV), 354–374 (LIAY…APGF), 383–403 (PVKI…AFIG), 407–427 (HAGL…LLYW), 443–463 (AFLL…LGML), and 481–501 (LMAV…VLGF).

The protein belongs to the MurJ/MviN family.

Its subcellular location is the cell inner membrane. Its pathway is cell wall biogenesis; peptidoglycan biosynthesis. In terms of biological role, involved in peptidoglycan biosynthesis. Transports lipid-linked peptidoglycan precursors from the inner to the outer leaflet of the cytoplasmic membrane. This Escherichia coli O157:H7 protein is Probable lipid II flippase MurJ.